A 159-amino-acid chain; its full sequence is MNDRIYLTRDGYNRLKEELYVLVHQKRKEVLEKIAEARAHGDLSENAEYDAAREEQSLTEAHIADLENKLSTATILDPKQVKTDKVYILTSVKLRDLDKEGEIIEYTLVSSEEADTDLGKISVRSPVGRALIGKTVGEKVQIMVPKGELHYEILEIFVK.

The stretch at 47-73 forms a coiled coil; that stretch reads AEYDAAREEQSLTEAHIADLENKLSTA.

This sequence belongs to the GreA/GreB family.

In terms of biological role, necessary for efficient RNA polymerase transcription elongation past template-encoded arresting sites. The arresting sites in DNA have the property of trapping a certain fraction of elongating RNA polymerases that pass through, resulting in locked ternary complexes. Cleavage of the nascent transcript by cleavage factors such as GreA or GreB allows the resumption of elongation from the new 3'terminus. GreA releases sequences of 2 to 3 nucleotides. The sequence is that of Transcription elongation factor GreA from Chlorobium phaeobacteroides (strain DSM 266 / SMG 266 / 2430).